Reading from the N-terminus, the 122-residue chain is Acyl carrier protein 1, mitochondrial (122 aa).

The N-terminal 34 residues, 1-34 (MALRNAILRHLRVPVQTLGLNQSKIGFLGTIRSF), are a transit peptide targeting the mitochondrion. In terms of domain architecture, Carrier spans 44 to 119 (EAVVDRVLDV…LAIEYVYNHP (76 aa)). The residue at position 79 (S79) is an O-(pantetheine 4'-phosphoryl)serine.

The protein belongs to the acyl carrier protein (ACP) family. Complex I is composed of at least 49 different subunits. Post-translationally, 4'-phosphopantetheine is transferred from CoA to a specific serine of the apo-ACP-like protein.

It localises to the mitochondrion. It functions in the pathway lipid metabolism; fatty acid biosynthesis. Its function is as follows. Carrier of the growing fatty acid chain in fatty acid biosynthesis. May be involved in the synthesis of short and medium chain fatty acids. Accessory and non-catalytic subunit of the mitochondrial membrane respiratory chain NADH dehydrogenase (Complex I), which functions in the transfer of electrons from NADH to the respiratory chain. The polypeptide is Acyl carrier protein 1, mitochondrial (MTACP1) (Arabidopsis thaliana (Mouse-ear cress)).